Reading from the N-terminus, the 118-residue chain is MNRRELGQKWEELAEQYLRKKGYKILTRNYQIRGGEIDIVAQDGEFLVFIEVRFRSDISFGTPSETVNEKKKASLKKAIKVYIHENFLYHLQPRVDFIGIEQKDNRFFVNHYQNVLDF.

This sequence belongs to the UPF0102 family.

In Carboxydothermus hydrogenoformans (strain ATCC BAA-161 / DSM 6008 / Z-2901), this protein is UPF0102 protein CHY_1414.